Here is a 361-residue protein sequence, read N- to C-terminus: Phospho-N-acetylmuramoyl-pentapeptide-transferase (361 aa).

10 helical membrane-spanning segments follow: residues Gly-27 to Leu-47, Thr-72 to Ala-92, Val-99 to Leu-119, Ala-139 to Tyr-159, Ala-169 to Gly-189, Gly-200 to Val-220, Leu-240 to Pro-260, Ile-264 to Ala-284, Ile-289 to Val-309, and Gln-338 to Leu-358.

The protein belongs to the glycosyltransferase 4 family. MraY subfamily. The cofactor is Mg(2+).

Its subcellular location is the cell inner membrane. The catalysed reaction is UDP-N-acetyl-alpha-D-muramoyl-L-alanyl-gamma-D-glutamyl-meso-2,6-diaminopimeloyl-D-alanyl-D-alanine + di-trans,octa-cis-undecaprenyl phosphate = di-trans,octa-cis-undecaprenyl diphospho-N-acetyl-alpha-D-muramoyl-L-alanyl-D-glutamyl-meso-2,6-diaminopimeloyl-D-alanyl-D-alanine + UMP. Its pathway is cell wall biogenesis; peptidoglycan biosynthesis. Catalyzes the initial step of the lipid cycle reactions in the biosynthesis of the cell wall peptidoglycan: transfers peptidoglycan precursor phospho-MurNAc-pentapeptide from UDP-MurNAc-pentapeptide onto the lipid carrier undecaprenyl phosphate, yielding undecaprenyl-pyrophosphoryl-MurNAc-pentapeptide, known as lipid I. The chain is Phospho-N-acetylmuramoyl-pentapeptide-transferase from Methylobacterium sp. (strain 4-46).